A 575-amino-acid polypeptide reads, in one-letter code: Transcription factor E3 (575 aa).

Serine 47 bears the Phosphoserine; by MTOR mark. Low complexity predominate over residues 90-126; that stretch reads ATLSASSSAGGSRTPAMSSSSSSRVLLRQQLMRAQAQ. The disordered stretch occupies residues 90 to 153; it reads ATLSASSSAG…SPAPASPAIS (64 aa). Residues 127 to 136 are compositionally biased toward basic and acidic residues; the sequence is EQERRERREQ. Arginine 188 carries the asymmetric dimethylarginine modification. Positions 211-246 are disordered; sequence LASQALTPPPGPASAQPLPAPEAAHTTGPTGSAPNS. A strong transcription activation domain region spans residues 260 to 271; that stretch reads EIDDVIDEIISL. Serine 321 is subject to Phosphoserine; by MTOR. Residue lysine 339 forms a Glycyl lysine isopeptide (Lys-Gly) (interchain with G-Cter in SUMO2) linkage. The bHLH domain maps to 346-399; it reads QKKDNHNLIERRRRFNINDRIKELGTLIPKSSDPEMRWNKGTILKASVDYIRKL. A Nuclear localization signal motif is present at residues 356-359; the sequence is RRRR. The interval 409 to 430 is leucine-zipper; it reads LESRQRSLEQANRSLQLRIQEL. 2 disordered regions span residues 473–498 and 534–575; these read GAATFHVGGGPAQNAPHQQPPAPPSD and GGLS…EEES. Over residues 539–575 the composition is skewed to low complexity; that stretch reads GALSPLRAASDPLLSSVSPAVSKASSRRSSFSMEEES. Phosphoserine is present on residues serine 542, serine 548, serine 554, serine 556, serine 560, and serine 568.

This sequence belongs to the MiT/TFE family. In terms of assembly, homodimer and heterodimer; with TFEB or MITF. Interacts with RRAGC/RagC GDP-bound and RRAGD/RagD GDP-bound; promoting its recruitment to lysosomal membrane in the presence of nutrients. Interacts with TSC22D1; the interaction is enhanced in the presence of TGF-beta. In terms of processing, sumoylated; does not affect dimerization with MITF. Phosphorylation ar Ser-47 and Ser-321 by MTOR via non-canonical mTORC1 pathway regulates its stability and subcellular location, respectively. When nutrients are present, phosphorylation by MTOR at Ser-47 promotes ubiquitination by the SCF(BTRC) complex, followed by degradation. When nutrients are present, phosphorylation by MTOR at Ser-321 also promotes association with 14-3-3/YWHA adapters and retention in the cytosol. Phosphorylation at Ser-47 plays a more critical role than phosphorylation at Ser-321 for TFE3 inactivation. Inhibition of mTORC1, starvation and lysosomal disruption, promotes dephosphorylation and transcription factor activity. Post-translationally, ubiquitinated by the SCF(BTRC) and SCF(FBXW11) complexes following phosphorylation at Ser-47 by MTOR, leading to its degradation by the proteasome. Ubiquitous in fetal and adult tissues.

It is found in the cytoplasm. Its subcellular location is the cytosol. It localises to the nucleus. The protein resides in the lysosome membrane. Transcription factor that acts as a master regulator of lysosomal biogenesis and immune response. Specifically recognizes and binds E-box sequences (5'-CANNTG-3'); efficient DNA-binding requires dimerization with itself or with another MiT/TFE family member such as TFEB or MITF. Involved in the cellular response to amino acid availability by acting downstream of MTOR: in the presence of nutrients, TFE3 phosphorylation by MTOR promotes its inactivation. Upon starvation or lysosomal stress, inhibition of MTOR induces TFE3 dephosphorylation, resulting in transcription factor activity. Specifically recognizes and binds the CLEAR-box sequence (5'-GTCACGTGAC-3') present in the regulatory region of many lysosomal genes, leading to activate their expression, thereby playing a central role in expression of lysosomal genes. Maintains the pluripotent state of embryonic stem cells by promoting the expression of genes such as ESRRB; mTOR-dependent TFE3 cytosolic retention and inactivation promotes exit from pluripotency. Required to maintain the naive pluripotent state of hematopoietic stem cell; mTOR-dependent cytoplasmic retention of TFE3 promotes the exit of hematopoietic stem cell from pluripotency. TFE3 activity is also involved in the inhibition of neuronal progenitor differentiation. Acts as a positive regulator of browning of adipose tissue by promoting expression of target genes; mTOR-dependent phosphorylation promotes cytoplasmic retention of TFE3 and inhibits browning of adipose tissue. In association with TFEB, activates the expression of CD40L in T-cells, thereby playing a role in T-cell-dependent antibody responses in activated CD4(+) T-cells and thymus-dependent humoral immunity. Specifically recognizes the MUE3 box, a subset of E-boxes, present in the immunoglobulin enhancer. It also binds very well to a USF/MLTF site. Promotes TGF-beta-induced transcription of COL1A2; via its interaction with TSC22D1 at E-boxes in the gene proximal promoter. May regulate lysosomal positioning in response to nutrient deprivation by promoting the expression of PIP4P1. This is Transcription factor E3 from Homo sapiens (Human).